The chain runs to 427 residues: Serine--tRNA ligase (427 aa).

232-234 (TAE) contributes to the L-serine binding site. ATP is bound at residue 263-265 (RSE). Residue Glu286 participates in L-serine binding. 350–353 (EISS) lines the ATP pocket. L-serine is bound at residue Ser385.

The protein belongs to the class-II aminoacyl-tRNA synthetase family. Type-1 seryl-tRNA synthetase subfamily. In terms of assembly, homodimer. The tRNA molecule binds across the dimer.

It is found in the cytoplasm. It carries out the reaction tRNA(Ser) + L-serine + ATP = L-seryl-tRNA(Ser) + AMP + diphosphate + H(+). The enzyme catalyses tRNA(Sec) + L-serine + ATP = L-seryl-tRNA(Sec) + AMP + diphosphate + H(+). It participates in aminoacyl-tRNA biosynthesis; selenocysteinyl-tRNA(Sec) biosynthesis; L-seryl-tRNA(Sec) from L-serine and tRNA(Sec): step 1/1. Functionally, catalyzes the attachment of serine to tRNA(Ser). Is also able to aminoacylate tRNA(Sec) with serine, to form the misacylated tRNA L-seryl-tRNA(Sec), which will be further converted into selenocysteinyl-tRNA(Sec). The chain is Serine--tRNA ligase from Lacticaseibacillus paracasei (strain ATCC 334 / BCRC 17002 / CCUG 31169 / CIP 107868 / KCTC 3260 / NRRL B-441) (Lactobacillus paracasei).